A 247-amino-acid chain; its full sequence is MKKLVLLRHGESVWNRENRFTGWTDVGLSEKGIEEAISAGRTLKEEGFVFDVAYTSVLKRAIKTLWLVLEEMDLMWIPEYRHWRLNERHYGALQGLNKAETAERHGMEQVMIWRRSYDIPPPPLTPDDQRFPGSDPRYASLLPEELPLTESLKDTVARFLPYWHETIAPAVKEGKRVLVTAHGNSLRALVKYLDLVSDSEIVNLNIPTGIPLVYELTDNMTPIRSYYLGDPDDVARASRMVADQIKK.

Residues 8–15 (RHGESVWN), 21–22 (TG), arginine 60, 87–90 (ERHY), lysine 98, 114–115 (RR), and 183–184 (GN) each bind substrate. Histidine 9 acts as the Tele-phosphohistidine intermediate in catalysis. Glutamate 87 functions as the Proton donor/acceptor in the catalytic mechanism.

This sequence belongs to the phosphoglycerate mutase family. BPG-dependent PGAM subfamily. In terms of assembly, homodimer.

The enzyme catalyses (2R)-2-phosphoglycerate = (2R)-3-phosphoglycerate. It participates in carbohydrate degradation; glycolysis; pyruvate from D-glyceraldehyde 3-phosphate: step 3/5. Its function is as follows. Catalyzes the interconversion of 2-phosphoglycerate and 3-phosphoglycerate. In Geobacter metallireducens (strain ATCC 53774 / DSM 7210 / GS-15), this protein is 2,3-bisphosphoglycerate-dependent phosphoglycerate mutase.